Reading from the N-terminus, the 220-residue chain is Cell division protein SepF (220 aa).

Positions 1 to 120 (MAIKDAFNKM…RREQYQHAAH (120 aa)) are disordered. Residues 26-35 (LSSKKQEEPV) are compositionally biased toward basic and acidic residues. A compositionally biased stretch (low complexity) spans 39–79 (QQTSRPNQQQQAARASQPQQPKQARPQMQAQQRPQSQSRAA). A compositionally biased stretch (basic and acidic residues) spans 93–102 (VSHDYNDRRA).

This sequence belongs to the SepF family. As to quaternary structure, homodimer. Interacts with FtsZ.

It is found in the cytoplasm. Its function is as follows. Cell division protein that is part of the divisome complex and is recruited early to the Z-ring. Probably stimulates Z-ring formation, perhaps through the cross-linking of FtsZ protofilaments. Its function overlaps with FtsA. The sequence is that of Cell division protein SepF from Streptococcus equi subsp. equi (strain 4047).